The chain runs to 101 residues: Urease subunit beta (101 aa).

Belongs to the urease beta subunit family. As to quaternary structure, heterotrimer of UreA (gamma), UreB (beta) and UreC (alpha) subunits. Three heterotrimers associate to form the active enzyme.

Its subcellular location is the cytoplasm. The enzyme catalyses urea + 2 H2O + H(+) = hydrogencarbonate + 2 NH4(+). It participates in nitrogen metabolism; urea degradation; CO(2) and NH(3) from urea (urease route): step 1/1. The polypeptide is Urease subunit beta (Rhizobium etli (strain CIAT 652)).